A 163-amino-acid chain; its full sequence is ATP synthase subunit b (163 aa).

Residues 13 to 33 (SFILFVWFCMKYIWPPIIFAI) form a helical membrane-spanning segment.

This sequence belongs to the ATPase B chain family. As to quaternary structure, F-type ATPases have 2 components, F(1) - the catalytic core - and F(0) - the membrane proton channel. F(1) has five subunits: alpha(3), beta(3), gamma(1), delta(1), epsilon(1). F(0) has three main subunits: a(1), b(2) and c(10-14). The alpha and beta chains form an alternating ring which encloses part of the gamma chain. F(1) is attached to F(0) by a central stalk formed by the gamma and epsilon chains, while a peripheral stalk is formed by the delta and b chains.

It localises to the cell membrane. F(1)F(0) ATP synthase produces ATP from ADP in the presence of a proton or sodium gradient. F-type ATPases consist of two structural domains, F(1) containing the extramembraneous catalytic core and F(0) containing the membrane proton channel, linked together by a central stalk and a peripheral stalk. During catalysis, ATP synthesis in the catalytic domain of F(1) is coupled via a rotary mechanism of the central stalk subunits to proton translocation. Functionally, component of the F(0) channel, it forms part of the peripheral stalk, linking F(1) to F(0). The chain is ATP synthase subunit b from Buchnera aphidicola subsp. Schizaphis graminum (strain Sg).